The chain runs to 127 residues: Serum amyloid A protein (127 aa).

The signal sequence occupies residues 1–18; it reads MRLCICFVLLAVIVCASA. The segment at 88–127 is disordered; that stretch reads QGGVSGRGAEDTRADQEANAWGRNGGDPNRYRPPGLPSKY.

Belongs to the SAA family. This protein is the precursor of amyloid protein A, which is formed by the removal of approximately 3 residues from the C-terminal end. In terms of tissue distribution, expressed by the liver; secreted in plasma. Also present in the liver and lung irrespective of induction.

The protein resides in the secreted. Its function is as follows. Major acute phase reactant. Apolipoprotein of the HDL complex. In Anas platyrhynchos (Mallard), this protein is Serum amyloid A protein.